Reading from the N-terminus, the 98-residue chain is Cell division topological specificity factor (98 aa).

It belongs to the MinE family.

Its function is as follows. Prevents the cell division inhibition by proteins MinC and MinD at internal division sites while permitting inhibition at polar sites. This ensures cell division at the proper site by restricting the formation of a division septum at the midpoint of the long axis of the cell. This Nitrosomonas eutropha (strain DSM 101675 / C91 / Nm57) protein is Cell division topological specificity factor.